The sequence spans 1305 residues: Contactin-associated protein like 5-1 (1305 aa).

Residues 1–24 (MDSLQRLNGLLTLVLSALWHLGLT) form the signal peptide. The 150-residue stretch at 25-174 (ASNYNCDDPL…IGMRVEAYGC (150 aa)) folds into the F5/8 type C domain. 2 Laminin G-like domains span residues 180–360 (VADF…TFSC) and 367–544 (PITF…IDLC). Residue Asn282 is glycosylated (N-linked (GlcNAc...) asparagine). A disulfide bridge links Cys329 with Cys360. The N-linked (GlcNAc...) asparagine glycan is linked to Asn496. 3 disulfides stabilise this stretch: Cys512–Cys544, Cys550–Cys561, and Cys555–Cys570. The EGF-like 1 domain maps to 546–583 (IKDRCLPNYCEHGGHCAQTWTTFYCNCSDTGYTGATCH). The N-linked (GlcNAc...) asparagine glycan is linked to Asn571. Residues Cys572 and Cys582 are joined by a disulfide bond. Residues 584–790 (DSIYEQSCEV…LRCNGDRHFW (207 aa)) form the Fibrinogen C-terminal domain. Asn622 is a glycosylation site (N-linked (GlcNAc...) asparagine). The 166-residue stretch at 791 to 956 (NAVSFSTEAS…KLMSGVTPGC (166 aa)) folds into the Laminin G-like 3 domain. Disulfide bonds link Cys929–Cys956, Cys960–Cys973, Cys967–Cys982, and Cys984–Cys994. The 39-residue stretch at 957 to 995 (PGHCSSYSSNCHNGGKCVEKQSGYSCDCTNSPNEGPFCQ) folds into the EGF-like 2 domain. In terms of domain architecture, Laminin G-like 4 spans 1014 to 1198 (EPYLVIKNTS…VHGTLTESGC (185 aa)). Asn1057 carries an N-linked (GlcNAc...) asparagine glycan. A disulfide bridge links Cys1163 with Cys1198. The chain crosses the membrane as a helical span at residues 1238 to 1258 (VIGGIIAVVTFVTFCVIGIMI).

It belongs to the neurexin family.

Its subcellular location is the membrane. Functionally, may play a role in the correct development and proper functioning of the peripheral and central nervous system and be involved in cell adhesion and intercellular communication. In Rattus norvegicus (Rat), this protein is Contactin-associated protein like 5-1 (Cntnap5a).